The chain runs to 285 residues: 1-deoxypentalenic acid 11-beta-hydroxylase (285 aa).

Residue R117 participates in substrate binding. Fe cation-binding residues include H137 and D139. Residues 137-139 (HQD) and W153 each bind 2-oxoglutarate. R188 contributes to the substrate binding site. Residue H226 participates in Fe cation binding. Positions 228 and 240 each coordinate 2-oxoglutarate.

This sequence belongs to the PhyH family. The cofactor is Fe cation. L-ascorbate serves as cofactor.

The catalysed reaction is 1-deoxypentalenate + 2-oxoglutarate + O2 = 1-deoxy-11beta-hydroxypentalenate + succinate + CO2. Its pathway is antibiotic biosynthesis; neopentalenolactone biosynthesis. Functionally, catalyzes the conversion of 1-deoxypentalenic acid to 11-beta-hydroxy-1-deoxypentalenic acid in the biosynthesis of neopentalenolactone antibiotic. The polypeptide is 1-deoxypentalenic acid 11-beta-hydroxylase (ptlH) (Streptomyces avermitilis (strain ATCC 31267 / DSM 46492 / JCM 5070 / NBRC 14893 / NCIMB 12804 / NRRL 8165 / MA-4680)).